We begin with the raw amino-acid sequence, 463 residues long: Fumarate hydratase class II (463 aa).

Substrate contacts are provided by residues 98 to 100 (SGT), 129 to 132 (HPND), 139 to 141 (SSN), and threonine 187. Histidine 188 acts as the Proton donor/acceptor in catalysis. Serine 318 is an active-site residue. Substrate is bound by residues serine 319 and 324 to 326 (KVN).

It belongs to the class-II fumarase/aspartase family. Fumarase subfamily. As to quaternary structure, homotetramer.

The protein localises to the cytoplasm. It carries out the reaction (S)-malate = fumarate + H2O. It participates in carbohydrate metabolism; tricarboxylic acid cycle; (S)-malate from fumarate: step 1/1. Functionally, involved in the TCA cycle. Catalyzes the stereospecific interconversion of fumarate to L-malate. The protein is Fumarate hydratase class II of Rickettsia bellii (strain RML369-C).